The primary structure comprises 612 residues: BTB/POZ domain-containing protein 9 (612 aa).

The BTB domain maps to 36-104 (GDVTFVVEKK…IYTGRATLTD (69 aa)). Residues 142–240 (VCMTFDVASL…SLTELLNVVR (99 aa)) enclose the BACK domain. Positions 559 to 612 (QQSTQKEDSSEEPGTGDLSTPSQQLDPHAPRAPSASSLPPSPGPNLHSPNQQNQ) are disordered. Residues 589-612 (RAPSASSLPPSPGPNLHSPNQQNQ) show a composition bias toward low complexity.

In terms of tissue distribution, detected throughout the gray matter of the spinal cord including the motor neurons (at protein level). In the brain, detected in the neurons of the hippocampus and in the Purkinje cells of the cerebellum (at protein level). Also detected in the terospenial cortex, bed nucleus of the stria terminalis (BST) and the ventrolateral thalamus (VL) (at protein level).

This chain is BTB/POZ domain-containing protein 9 (Btbd9), found in Rattus norvegicus (Rat).